Reading from the N-terminus, the 430-residue chain is Forkhead box protein N2 (430 aa).

The segment at 1–47 (MGPATGMTPDKNIESPTAEKVPGLSQTENMGSLPEEVGAARPKASMV) is disordered. Positions 108–204 (KPPYSFSLLI…QALKKQPFSS (97 aa)) form a DNA-binding region, fork-head. 2 disordered regions span residues 299 to 326 (NIDP…SVSS) and 338 to 391 (PKNS…EASQ). Residues 355-366 (DDTDIDYEEDTL) are compositionally biased toward acidic residues. Basic and acidic residues predominate over residues 381–390 (HGSKLRKEAS).

Expressed in the developing eye from stage 23. Localized to the prospective retinal layer and a layer of cells lateral to the ventricular zone. At stage 29, expression extends to the branchial arches and the brain. At stage 33/34, expressed in the vagal ganglion. At stage 36, expression in the retina decreases. Not expressed in the eye lens.

It localises to the nucleus. The chain is Forkhead box protein N2 from Xenopus laevis (African clawed frog).